Reading from the N-terminus, the 290-residue chain is MPEIHLGAHTIRSHGVTVARFHMHDWLILLLLIVIEIVLNVIEPFHRFVGEDMLTDLRYPLQDNTIPFWAVPLIAVVLPFAVICVYYFIRNDVYDLHHAILGLLFSVLITGVITDAIKDAVGRPRPDFFWRCFPDGIGIFHNVTKNVLCTGAKDVVKEGHKSFPSGHTSWSFAGLGFLSLYLSGKIRVFDQRGHVAKLCIVILPLLVAALVGVSRVDDYWHHWQDVFGGAIIGLTVATFCYLQFFPPPYDPDGWGPHAYFQMLADSRNDVQDSAGMNHLSVRQTELESVR.

3 consecutive transmembrane segments (helical) span residues 26–46 (WLIL…EPFH), 69–89 (WAVP…YYFI), and 93–113 (VYDL…TGVI). N-linked (GlcNAc...) asparagine glycosylation is present at Asn142. Transmembrane regions (helical) follow at residues 162–182 (SFPS…SLYL), 193–213 (GHVA…LVGV), and 226–246 (VFGG…QFFP).

This sequence belongs to the PA-phosphatase related phosphoesterase family. Expressed in roots, stems, leaves, buds, flowers and siliques.

It is found in the membrane. With respect to regulation, PA phosphatase activity not inhibited by N-ethylmaleimide. Its function is as follows. May play a general 'housekeeping role' in lipid metabolism. Exhibits both diacylglycerol pyrophosphate (DGPP) phosphatase and phosphatidate (PA) phosphatase activities with no preference for either substrate. May play a role downstream of the ABA signaling pathway during seed germination and in stomatal movement in leaves. The protein is Lipid phosphate phosphatase 2 (LPP2) of Arabidopsis thaliana (Mouse-ear cress).